The chain runs to 507 residues: Maturase K (507 aa).

Belongs to the intron maturase 2 family. MatK subfamily.

It is found in the plastid. Its subcellular location is the chloroplast. Functionally, usually encoded in the trnK tRNA gene intron. Probably assists in splicing its own and other chloroplast group II introns. The protein is Maturase K of Umbellularia californica (California bay laurel).